Here is a 158-residue protein sequence, read N- to C-terminus: Curculin-2 (158 aa).

The first 22 residues, 1 to 22, serve as a signal peptide directing secretion; it reads MAAKFLLTILVTFAAVASLGMA. The 109-residue stretch at 23-131 folds into the Bulb-type lectin domain; sequence DSVLLSGQTL…VLWPLGLNGC (109 aa). Cys51 and Cys74 form a disulfide bridge. Asn103 carries N-linked (GlcNAc...) asparagine glycosylation. The propeptide occupies 136–158; it reads GEITVAKDSTEPQHEDIKMVINN.

As to quaternary structure, heterodimer with curculin-1; Disulfide-linked.

Its function is as follows. Taste-modifying protein; sweet-tasting. After curculin, water elicits a sweet taste, and sour substances induce a stronger sense of sweetness. This chain is Curculin-2, found in Molineria latifolia (Lumbah).